Reading from the N-terminus, the 604-residue chain is Zinc finger protein chinmo (604 aa).

Residues 32-98 (ADVILSCDGV…MYKGEVHVSQ (67 aa)) form the BTB domain. Disordered regions lie at residues 122–155 (RLAA…SGGS), 291–310 (CDSL…GYTH), 330–437 (RSPY…DEST), and 450–470 (NLKY…TPNT). Residues 364-374 (PSSSASSTAPT) show a composition bias toward low complexity. Residues 384-409 (ASPQSSRYENHSPSTTAGNGNATSSL) are compositionally biased toward polar residues. Over residues 425–437 (ANDDDRELMDEST) the composition is skewed to acidic residues. Positions 461–470 (SNTSSTTPNT) are enriched in low complexity. 2 consecutive C2H2-type zinc fingers follow at residues 517-540 (LKCL…RQRH) and 545-568 (VPCP…AREH).

In terms of tissue distribution, broadly expressed in the developing larval central nervous system (at protein level). Expressed in the larval lymph gland and circulating hemocytes (at protein level). Expressed in all cell types of the adult testis stem cell niche but not detected in somatic cells of the adult ovary (at protein level). In the testis, expressed at high levels in cyst stem cells and early cyst cells and, at lower levels, in germline stem cells (at protein level).

Its subcellular location is the nucleus. In terms of biological role, required for morphological differentiation of postmitotic neurons during postembryonic brain development. Ensures production of appropriate neuron subtypes within a lineage by preventing precocious generation of late neuronal types of that lineage. Acts as a downstream mediator of the transcriptional activator Stat92e and is required for the development of the eye-antennal disk which gives rise to the adult eye, antenna and head capsule, for transcriptional repression of the Notch receptor ligand Ser and for the self-renewal of cyst stem cells in the testis. In the adult testis, maintains the male identify of adult somatic cyst stem cells. Represses expression and alternative splicing of transformer pre-mRNA, resulting in the production of the male-specific isoform of transcription factor dsx which ensures male-specific transcription of target genes. Plays a role in actin nuclear localization through its involvement in repressing the expression of the kinase Cdi. This maintains the cofilin/actin-depolymerizing factor homolog tsr in its unphosphorylated state which is required for actin nuclear import. The polypeptide is Zinc finger protein chinmo (Drosophila melanogaster (Fruit fly)).